A 703-amino-acid polypeptide reads, in one-letter code: Calpain-8 (703 aa).

One can recognise a Calpain catalytic domain in the interval 45–344; the sequence is LFKDPEFPAC…FSRLEICNLS (300 aa). Catalysis depends on residues C105, H262, and N286. Residues 355–512 form a domain III region; the sequence is KWNLVLFNGR…VFSEKKAQAL (158 aa). Positions 513–531 are linker; the sequence is EIGDAVPGDPHEPHPRDMD. 4 consecutive EF-hand domains span residues 531-566, 575-610, 605-640, and 670-703; these read DGEDEHFWSLSEEFADKDSEISAHQLKRVLNGLLSK, FNINTCREMISLLDGDGTGSLRPVEFKTLWLKICKY, LKICKYLEIYQEMDHSRAGTIDAHEMRTALKKAGFT, and IRLEILFKLFRLLDKDQNGIVQLSLAEWLCRALV. The domain IV stretch occupies residues 532 to 703; it reads GEDEHFWSLS…LAEWLCRALV (172 aa). Residues D588, D590, T592, S594, E599, D618, S620, T624, and E629 each contribute to the Ca(2+) site.

The protein belongs to the peptidase C2 family. Monomer and homooligomer. Interacts with COPS1/GPS1, COPB1, EYA2, NME2, NME4 and TOMM70. Ca(2+) serves as cofactor. In terms of processing, undergoes autolytic cleavage between Ala-5 and Ala-6 which gives rise to fragments extending from Ala-6 to the C-terminus, Ala-6 to the EF-hand 2 domain and from Ala-6 to the beginning of domain III. Predominantly expressed in the stomach. Localizes strictly to the surface mucus cells in the gastric epithelium and the mucus-secreting goblet cells in the duodenum.

It is found in the cytoplasm. The protein localises to the golgi apparatus. The enzyme catalyses Broad endopeptidase specificity.. Its activity is regulated as follows. The concentration of calcium for half-maximal activity is 0.3 mM. Inhibited by calpastatin and calpeptin. Calcium-regulated non-lysosomal thiol-protease. Involved in membrane trafficking in the gastric surface mucus cells (pit cells) and may involve the membrane trafficking of mucus cells via interactions with coat protein. Proteolytically cleaves the beta-subunit of coatomer complex. The protein is Calpain-8 (Capn8) of Mus musculus (Mouse).